A 130-amino-acid chain; its full sequence is Histone H2A type 1-D (130 aa).

A disordered region spans residues 1–22; that stretch reads MSGRGKQGGKARAKAKTRSSRA. Ser2 is subject to N-acetylserine. Position 2 is a phosphoserine; by RPS6KA5 (Ser2). Position 4 is a citrulline; alternate (Arg4). A Symmetric dimethylarginine; by PRMT5; alternate modification is found at Arg4. 2 positions are modified to N6-(2-hydroxyisobutyryl)lysine; alternate: Lys6 and Lys10. Lys6 carries the post-translational modification N6-acetyllysine; alternate. Residues 7 to 19 show a composition bias toward basic residues; the sequence is QGGKARAKAKTRS. Lys10 and Lys14 each carry N6-(beta-hydroxybutyryl)lysine; alternate. Lys10 carries the N6-lactoyllysine; alternate modification. The residue at position 10 (Lys10) is an N6-succinyllysine; alternate. Residue Lys14 forms a Glycyl lysine isopeptide (Lys-Gly) (interchain with G-Cter in ubiquitin); alternate linkage. A Glycyl lysine isopeptide (Lys-Gly) (interchain with G-Cter in ubiquitin) cross-link involves residue Lys16. Lys37 bears the N6-(2-hydroxyisobutyryl)lysine; alternate mark. Lys37 carries the N6-(beta-hydroxybutyryl)lysine; alternate modification. Residue Lys37 is modified to N6-crotonyllysine; alternate. Lys75 and Lys76 each carry N6-(2-hydroxyisobutyryl)lysine. Lys96 bears the N6-(2-hydroxyisobutyryl)lysine; alternate mark. The residue at position 96 (Lys96) is an N6-(beta-hydroxybutyryl)lysine; alternate. Residue Lys96 is modified to N6-succinyllysine; alternate. Lys96 bears the N6-glutaryllysine; alternate mark. An N6-glutaryllysine modification is found at Lys100. Gln105 is modified (N5-methylglutamine). Lys119 is subject to N6-(2-hydroxyisobutyryl)lysine; alternate. An N6-(beta-hydroxybutyryl)lysine; alternate modification is found at Lys119. N6-crotonyllysine; alternate is present on residues Lys119 and Lys120. N6-glutaryllysine; alternate is present on residues Lys119 and Lys120. Lys120 participates in a covalent cross-link: Glycyl lysine isopeptide (Lys-Gly) (interchain with G-Cter in ubiquitin); alternate. Residue Thr121 is modified to Phosphothreonine; by DCAF1. Lys126 is modified (N6-crotonyllysine; alternate). Lys126 is modified (N6-glutaryllysine; alternate).

Belongs to the histone H2A family. The nucleosome is a histone octamer containing two molecules each of H2A, H2B, H3 and H4 assembled in one H3-H4 heterotetramer and two H2A-H2B heterodimers. The octamer wraps approximately 147 bp of DNA. Post-translationally, deiminated on Arg-4 in granulocytes upon calcium entry. Monoubiquitination of Lys-120 (H2AK119Ub) by RING1, TRIM37 and RNF2/RING2 complex gives a specific tag for epigenetic transcriptional repression and participates in X chromosome inactivation of female mammals. It is involved in the initiation of both imprinted and random X inactivation. Ubiquitinated H2A is enriched in inactive X chromosome chromatin. Ubiquitination of H2A functions downstream of methylation of 'Lys-27' of histone H3 (H3K27me). H2AK119Ub by RNF2/RING2 can also be induced by ultraviolet and may be involved in DNA repair. Monoubiquitination of Lys-120 (H2AK119Ub) by TRIM37 may promote transformation of cells in a number of breast cancers. Following DNA double-strand breaks (DSBs), it is ubiquitinated through 'Lys-63' linkage of ubiquitin moieties by the E2 ligase UBE2N and the E3 ligases RNF8 and RNF168, leading to the recruitment of repair proteins to sites of DNA damage. Ubiquitination at Lys-14 and Lys-16 (H2AK13Ub and H2AK15Ub, respectively) in response to DNA damage is initiated by RNF168 that mediates monoubiquitination at these 2 sites, and 'Lys-63'-linked ubiquitin are then conjugated to monoubiquitin; RNF8 is able to extend 'Lys-63'-linked ubiquitin chains in vitro. Deubiquitinated by USP51 at Lys-14 and Lys-16 (H2AK13Ub and H2AK15Ub, respectively) after damaged DNA is repaired. H2AK119Ub and ionizing radiation-induced 'Lys-63'-linked ubiquitination (H2AK13Ub and H2AK15Ub) are distinct events. In terms of processing, phosphorylation on Ser-2 (H2AS1ph) is enhanced during mitosis. Phosphorylation on Ser-2 by RPS6KA5/MSK1 directly represses transcription. Acetylation of H3 inhibits Ser-2 phosphorylation by RPS6KA5/MSK1. Phosphorylation at Thr-121 (H2AT120ph) by DCAF1 is present in the regulatory region of many tumor suppresor genes and down-regulates their transcription. Post-translationally, glutamine methylation at Gln-105 (H2AQ104me) by FBL is specifically dedicated to polymerase I. It is present at 35S ribosomal DNA locus and impairs binding of the FACT complex. Symmetric dimethylation on Arg-4 by the PRDM1/PRMT5 complex may play a crucial role in the germ-cell lineage. In terms of processing, crotonylation (Kcr) is specifically present in male germ cells and marks testis-specific genes in post-meiotic cells, including X-linked genes that escape sex chromosome inactivation in haploid cells. Crotonylation marks active promoters and enhancers and confers resistance to transcriptional repressors. It is also associated with post-meiotically activated genes on autosomes. Post-translationally, lactylated in macrophages by EP300/P300 by using lactoyl-CoA directly derived from endogenous or exogenous lactate, leading to stimulates gene transcription.

The protein resides in the nucleus. Its subcellular location is the chromosome. Its function is as follows. Core component of nucleosome. Nucleosomes wrap and compact DNA into chromatin, limiting DNA accessibility to the cellular machineries which require DNA as a template. Histones thereby play a central role in transcription regulation, DNA repair, DNA replication and chromosomal stability. DNA accessibility is regulated via a complex set of post-translational modifications of histones, also called histone code, and nucleosome remodeling. The chain is Histone H2A type 1-D from Homo sapiens (Human).